The chain runs to 270 residues: Cyclic AMP-dependent transcription factor ATF-1 (270 aa).

The interval 1-91 (MEDSHKSNTS…DGENPGVSAV (91 aa)) is disordered. A compositionally biased stretch (polar residues) spans 9-21 (TSETAPQSGSTVQ). A KID domain is found at 31 to 90 (QVSSLSESEESQDSSDSIGSSQKTHGILARRPSYRKILKDLSSEDIRGRKGDGENPGVSA). Position 63 is a phosphoserine; by CaMK1, CDK3, RPS6KA4 and RPS6KA5 (S63). The span at 67–83 (ILKDLSSEDIRGRKGDG) shows a compositional bias: basic and acidic residues. A Phosphoserine; by HIPK2 modification is found at S197. Glycyl lysine isopeptide (Lys-Gly) (interchain with G-Cter in SUMO2) cross-links involve residues K207 and K214. Residues 212–270 (QLKREIRLMKNREAARECRRKKKEYVKCLENRVAVLENQNKTLIEELKTLKDLYSNKSV) enclose the bZIP domain. The segment at 214-238 (KREIRLMKNREAARECRRKKKEYVK) is basic motif. The interval 240–261 (LENRVAVLENQNKTLIEELKTL) is leucine-zipper.

Belongs to the bZIP family. ATF subfamily. Binds DNA as a dimer. Interacts with HIPK2 and CDK3. Interacts with MOTS-c, a peptide produced by the mitochondrially encoded 12S rRNA MT-RNR1; the interaction occurs in the nucleus following metabolic stress. Phosphorylated at Ser-197 by HIPK2 in response to genotoxic stress. This phosphorylation promotes transcription repression of FTH1 and other antioxidant detoxification genes. The CDK3-mediated phosphorylation at Ser-63 promotes its transactivation and transcriptional activities. Phosphorylated at Ser-63 by RPS6KA4 and RPS6KA5 in response to mitogenic or stress stimuli.

It is found in the nucleus. In terms of biological role, this protein binds the cAMP response element (CRE) (consensus: 5'-GTGACGT[AC][AG]-3'), a sequence present in many viral and cellular promoters. Mediates PKA-induced stimulation of CRE-reporter genes. Represses the expression of FTH1 and other antioxidant detoxification genes. Triggers cell proliferation and transformation. The chain is Cyclic AMP-dependent transcription factor ATF-1 (ATF1) from Bos taurus (Bovine).